Reading from the N-terminus, the 106-residue chain is NADH dehydrogenase [ubiquinone] 1 beta subcomplex subunit 9 (106 aa).

Belongs to the complex I LYR family. Complex I is composed of about 45 different subunits.

It is found in the mitochondrion inner membrane. Accessory subunit of the mitochondrial membrane respiratory chain NADH dehydrogenase (Complex I), that is believed to be not involved in catalysis. Complex I functions in the transfer of electrons from NADH to the respiratory chain. The immediate electron acceptor for the enzyme is believed to be ubiquinone. The polypeptide is NADH dehydrogenase [ubiquinone] 1 beta subcomplex subunit 9 (ndufb9) (Dictyostelium discoideum (Social amoeba)).